Here is a 260-residue protein sequence, read N- to C-terminus: Ribosomal RNA small subunit methyltransferase J (260 aa).

S-adenosyl-L-methionine is bound by residues 125–126 and Asp179; that span reads ER.

It belongs to the methyltransferase superfamily. RsmJ family.

It localises to the cytoplasm. The enzyme catalyses guanosine(1516) in 16S rRNA + S-adenosyl-L-methionine = N(2)-methylguanosine(1516) in 16S rRNA + S-adenosyl-L-homocysteine + H(+). In terms of biological role, specifically methylates the guanosine in position 1516 of 16S rRNA. This is Ribosomal RNA small subunit methyltransferase J from Pseudomonas entomophila (strain L48).